A 316-amino-acid chain; its full sequence is ATP synthase gamma chain (316 aa).

Belongs to the ATPase gamma chain family. As to quaternary structure, F-type ATPases have 2 components, CF(1) - the catalytic core - and CF(0) - the membrane proton channel. CF(1) has five subunits: alpha(3), beta(3), gamma(1), delta(1), epsilon(1). CF(0) has three main subunits: a, b and c.

The protein localises to the cellular thylakoid membrane. Functionally, produces ATP from ADP in the presence of a proton gradient across the membrane. The gamma chain is believed to be important in regulating ATPase activity and the flow of protons through the CF(0) complex. The protein is ATP synthase gamma chain of Prochlorococcus marinus (strain MIT 9215).